Reading from the N-terminus, the 811-residue chain is Bifunctional enzyme MurC/Ddl (811 aa).

The UDP-N-acetylmuramate--alanine ligase stretch occupies residues Met-1 to Lys-450. ATP contacts are provided by residues Gly-111–Thr-117 and Leu-607–Ile-662. Residues Lys-451 to Ser-811 are D-alanine--D-alanine ligase. The ATP-grasp domain occupies Lys-574–Ile-785. 3 residues coordinate Mg(2+): Asp-739, Glu-752, and Asn-754.

This sequence in the N-terminal section; belongs to the MurCDEF family. In the C-terminal section; belongs to the D-alanine--D-alanine ligase family. Mg(2+) serves as cofactor. The cofactor is Mn(2+).

Its subcellular location is the cytoplasm. The catalysed reaction is UDP-N-acetyl-alpha-D-muramate + L-alanine + ATP = UDP-N-acetyl-alpha-D-muramoyl-L-alanine + ADP + phosphate + H(+). It catalyses the reaction 2 D-alanine + ATP = D-alanyl-D-alanine + ADP + phosphate + H(+). It functions in the pathway cell wall biogenesis; peptidoglycan biosynthesis. The sequence is that of Bifunctional enzyme MurC/Ddl (murC/ddlA) from Chlamydia caviae (strain ATCC VR-813 / DSM 19441 / 03DC25 / GPIC) (Chlamydophila caviae).